The following is a 124-amino-acid chain: Fluoride-specific ion channel FluC (124 aa).

The next 4 helical transmembrane spans lie at 5 to 25 (ILAVSAAGIAGTLLRFAAGTW), 38 to 58 (TLAVNLVGCLIIGLLYGWFLL), 69 to 89 (GLIVGFVGGLTTFSSFSLDTL), and 97 to 117 (ALIAFGYLGISVFGGLLATWA). 2 residues coordinate Na(+): glycine 76 and threonine 79.

It belongs to the fluoride channel Fluc/FEX (TC 1.A.43) family.

Its subcellular location is the cell inner membrane. The catalysed reaction is fluoride(in) = fluoride(out). Its activity is regulated as follows. Na(+) is not transported, but it plays an essential structural role and its presence is essential for fluoride channel function. Its function is as follows. Fluoride-specific ion channel. Important for reducing fluoride concentration in the cell, thus reducing its toxicity. This Pseudomonas fluorescens (strain SBW25) protein is Fluoride-specific ion channel FluC.